A 1020-amino-acid polypeptide reads, in one-letter code: Valine--tRNA ligase (1020 aa).

The 'HIGH' region motif lies at 45–55; it reads PNVTGALHVGH. Positions 661–665 match the 'KMSKS' region motif; the sequence is KMSKT. K664 contacts ATP. The stretch at 955–1020 forms a coiled coil; sequence AEKDRLEKAK…EALARLAELG (66 aa).

It belongs to the class-I aminoacyl-tRNA synthetase family. ValS type 1 subfamily. Monomer.

The protein resides in the cytoplasm. It carries out the reaction tRNA(Val) + L-valine + ATP = L-valyl-tRNA(Val) + AMP + diphosphate. Its function is as follows. Catalyzes the attachment of valine to tRNA(Val). As ValRS can inadvertently accommodate and process structurally similar amino acids such as threonine, to avoid such errors, it has a 'posttransfer' editing activity that hydrolyzes mischarged Thr-tRNA(Val) in a tRNA-dependent manner. The sequence is that of Valine--tRNA ligase from Ruegeria pomeroyi (strain ATCC 700808 / DSM 15171 / DSS-3) (Silicibacter pomeroyi).